Consider the following 258-residue polypeptide: Probable glycerol uptake facilitator protein (258 aa).

Helical transmembrane passes span 11-31 (WWFLAELIGTFILIIFGNGAV) and 50-70 (TVALTWGIGVLFGVLTANAIF). Positions 77 to 79 (NPA) match the NPA 1 motif. A run of 3 helical transmembrane segments spans residues 95 to 115 (ALIWPGFVIGILAQFLGAMIA), 152 to 172 (FLTEFIATLILIGGVVAASHF), and 180 to 200 (VPPGFMGLWLVAGIIIAFGGA). Positions 206–208 (NPA) match the NPA 2 motif. A helical membrane pass occupies residues 233 to 253 (WIPVIAPLSAGLVLSIIIGFS).

This sequence belongs to the MIP/aquaporin (TC 1.A.8) family.

Its subcellular location is the cell membrane. It catalyses the reaction glycerol(in) = glycerol(out). Its function is as follows. Mediates glycerol diffusion across the cytoplasmic membrane via a pore-type mechanism. In Mycoplasma genitalium (strain ATCC 33530 / DSM 19775 / NCTC 10195 / G37) (Mycoplasmoides genitalium), this protein is Probable glycerol uptake facilitator protein (glpF).